The sequence spans 173 residues: Photosystem I assembly protein Ycf3 (173 aa).

TPR repeat units lie at residues 35–68 (AYIY…EENK), 72–105 (GETL…NPKQ), and 120–153 (GRYA…YPGG).

The protein belongs to the Ycf3 family.

It localises to the cellular thylakoid membrane. Its function is as follows. Essential for the assembly of the photosystem I (PSI) complex. May act as a chaperone-like factor to guide the assembly of the PSI subunits. This is Photosystem I assembly protein Ycf3 from Prochlorococcus marinus (strain MIT 9215).